Reading from the N-terminus, the 63-residue chain is Sec-independent protein translocase protein TatA (63 aa).

Residues Met-1 to Gly-21 traverse the membrane as a helical segment. Residues Gly-42–Lys-63 are disordered. The segment covering Lys-53 to Lys-63 has biased composition (basic and acidic residues).

The protein belongs to the TatA/E family. In terms of assembly, the Tat system comprises two distinct complexes: a TatABC complex, containing multiple copies of TatA, TatB and TatC subunits, and a separate TatA complex, containing only TatA subunits. Substrates initially bind to the TatABC complex, which probably triggers association of the separate TatA complex to form the active translocon.

The protein resides in the cell inner membrane. Functionally, part of the twin-arginine translocation (Tat) system that transports large folded proteins containing a characteristic twin-arginine motif in their signal peptide across membranes. TatA could form the protein-conducting channel of the Tat system. The sequence is that of Sec-independent protein translocase protein TatA from Rhizobium etli (strain CIAT 652).